The following is a 74-amino-acid chain: Large ribosomal subunit protein uL30 (74 aa).

The protein belongs to the universal ribosomal protein uL30 family. Part of the 50S ribosomal subunit.

The protein is Large ribosomal subunit protein uL30 of Micrococcus luteus (strain ATCC 4698 / DSM 20030 / JCM 1464 / CCM 169 / CCUG 5858 / IAM 1056 / NBRC 3333 / NCIMB 9278 / NCTC 2665 / VKM Ac-2230) (Micrococcus lysodeikticus).